Reading from the N-terminus, the 676-residue chain is Pescadillo homolog (676 aa).

The segment at Thr277–Asp296 is disordered. Low complexity predominate over residues Ser281 to Gln291. The 117-residue stretch at Glu351–Pro467 folds into the BRCT domain. The tract at residues Leu471–Lys676 is disordered. Residues Glu494–Ala519 are compositionally biased toward acidic residues. The span at Pro520–Glu531 shows a compositional bias: basic and acidic residues. Composition is skewed to acidic residues over residues Ser532–Val541 and Ala548–Glu581. Residues Glu571–Lys676 adopt a coiled-coil conformation. A compositionally biased stretch (basic and acidic residues) spans Ala582 to Glu592. Residues Lys611 to Lys624 show a composition bias toward basic residues. Positions Arg625–Lys635 are enriched in basic and acidic residues.

It belongs to the pescadillo family. Component of the NOP7 complex, composed of erb1, nop7 and ytm1. The complex is held together by erb1, which interacts with nop7 via its N-terminal domain and with ytm1 via a high-affinity interaction between the seven-bladed beta-propeller domains of the 2 proteins. The NOP7 complex associates with the 66S pre-ribosome.

The protein resides in the nucleus. The protein localises to the nucleolus. It localises to the nucleoplasm. In terms of biological role, component of the NOP7 complex, which is required for maturation of the 25S and 5.8S ribosomal RNAs and formation of the 60S ribosome. The chain is Pescadillo homolog (nop7) from Aspergillus terreus (strain NIH 2624 / FGSC A1156).